Here is an 89-residue protein sequence, read N- to C-terminus: Small ribosomal subunit protein uS14A (89 aa).

It belongs to the universal ribosomal protein uS14 family. In terms of assembly, part of the 30S ribosomal subunit. Contacts proteins S3 and S10.

Binds 16S rRNA, required for the assembly of 30S particles and may also be responsible for determining the conformation of the 16S rRNA at the A site. This Streptococcus agalactiae serotype Ia (strain ATCC 27591 / A909 / CDC SS700) protein is Small ribosomal subunit protein uS14A.